The chain runs to 106 residues: Small ribosomal subunit protein uS10 (106 aa).

It belongs to the universal ribosomal protein uS10 family. Part of the 30S ribosomal subunit.

Involved in the binding of tRNA to the ribosomes. The sequence is that of Small ribosomal subunit protein uS10 from Archaeoglobus fulgidus (strain ATCC 49558 / DSM 4304 / JCM 9628 / NBRC 100126 / VC-16).